Reading from the N-terminus, the 226-residue chain is Deoxyribose-phosphate aldolase (226 aa).

D95 acts as the Proton donor/acceptor in catalysis. K157 (schiff-base intermediate with acetaldehyde) is an active-site residue. K186 (proton donor/acceptor) is an active-site residue.

Belongs to the DeoC/FbaB aldolase family. DeoC type 1 subfamily.

It is found in the cytoplasm. It catalyses the reaction 2-deoxy-D-ribose 5-phosphate = D-glyceraldehyde 3-phosphate + acetaldehyde. The protein operates within carbohydrate degradation; 2-deoxy-D-ribose 1-phosphate degradation; D-glyceraldehyde 3-phosphate and acetaldehyde from 2-deoxy-alpha-D-ribose 1-phosphate: step 2/2. Its activity is regulated as follows. Partially inhibited by acetaldehyde. After incubation for 2, 4 and 6 hours in 300 mM acetaldehyde at 25 degrees Celsius, retains approximately 61.32%, 42.33% and 34.73% of the initial 2-deoxy-D-ribose-5-phosphate (DR5P) cleavage activity, respectively. In terms of biological role, catalyzes a reversible aldol reaction between acetaldehyde and D-glyceraldehyde 3-phosphate to generate 2-deoxy-D-ribose 5-phosphate. In vitro, DERA can catalyze the aldol condensation of chloroacetaldehyde (CHAD) and acetaldehyde (ACD), yielding (S)-4-chloro-3-hydroxybutanal ((S)-CHB), which can combine with another aldehyde to form (3R,5S)-6-chloro-2,4,6-trideoxyhexapyranose (CTeHP), a key intermediate for statin drugs. The polypeptide is Deoxyribose-phosphate aldolase (Pseudomonas syringae pv. syringae (strain B728a)).